Consider the following 104-residue polypeptide: Large ribosomal subunit protein uL24 (104 aa).

This sequence belongs to the universal ribosomal protein uL24 family. In terms of assembly, part of the 50S ribosomal subunit.

One of two assembly initiator proteins, it binds directly to the 5'-end of the 23S rRNA, where it nucleates assembly of the 50S subunit. In terms of biological role, one of the proteins that surrounds the polypeptide exit tunnel on the outside of the subunit. This Bradyrhizobium sp. (strain ORS 278) protein is Large ribosomal subunit protein uL24.